Reading from the N-terminus, the 51-residue chain is Sec-independent protein translocase protein TatA (51 aa).

A helical membrane pass occupies residues 1–21 (MGMSFSHLLIILLIIFVLFGA).

Belongs to the TatA/E family. In terms of assembly, the Tat system comprises two distinct complexes: a TatABC complex, containing multiple copies of TatA, TatB and TatC subunits, and a separate TatA complex, containing only TatA subunits. Substrates initially bind to the TatABC complex, which probably triggers association of the separate TatA complex to form the active translocon.

Its subcellular location is the cell inner membrane. Functionally, part of the twin-arginine translocation (Tat) system that transports large folded proteins containing a characteristic twin-arginine motif in their signal peptide across membranes. TatA could form the protein-conducting channel of the Tat system. This is Sec-independent protein translocase protein TatA from Rickettsia bellii (strain RML369-C).